The sequence spans 54 residues: Ovomucoid (54 aa).

Residues 4–54 enclose the Kazal-like domain; the sequence is VDCSEHPKPACTLEDRPLCGSDNKIYSNKCDFCNAVLESNGTLTLSHFGKC. Cystine bridges form between C6-C36, C14-C33, and C22-C54. N43 carries an N-linked (GlcNAc...) asparagine glycan.

It localises to the secreted. In Argusianus argus (Great argus), this protein is Ovomucoid.